The chain runs to 1916 residues: Endoribonuclease Dicer (1916 aa).

Residues 51 to 227 (LLEAALDHNT…ELEEKIQKLE (177 aa)) form the Helicase ATP-binding domain. 64-71 (LNTGSGKT) contacts ATP. Residues 175-178 (DECH) carry the DECH box motif. Positions 256-595 (DCGPFTDRSG…LRNKCSKSAD (340 aa)) are required for interaction with PRKRA and TARBP2. The disordered stretch occupies residues 409–433 (YVSWSDSEDDDDDEEIEEKEKPETN). Phosphoserine is present on residues Ser413 and Ser415. Residues 414-425 (DSEDDDDDEEIE) are compositionally biased toward acidic residues. The Helicase C-terminal domain occupies 433–602 (NFPSPFTNIL…SADGAEADVH (170 aa)). The Dicer dsRNA-binding fold domain maps to 630–722 (AIGHINRYCA…MPVGKETVKY (93 aa)). Residues 726–745 (LDLHDEEETSVPGRPGSTKR) form a disordered region. One can recognise a PAZ domain in the interval 895–1042 (KFMEDIEKSE…LVPELCAIHP (148 aa)). Phosphoserine occurs at positions 1016 and 1160. In terms of domain architecture, RNase III 1 spans 1276–1403 (DSEQSPSVGY…SEKWEKDEMT (128 aa)). 3 residues coordinate Mg(2+): Glu1316, Glu1395, and Glu1398. Phosphoserine occurs at positions 1456, 1464, and 1466. The interval 1598–1626 (ALDPAQENGSSQQKSLSGSCAAPVGPRSS) is disordered. A compositionally biased stretch (polar residues) spans 1604–1615 (ENGSSQQKSLSG). The region spanning 1660–1818 (FETFEKKINY…LAGAIYMDSG (159 aa)) is the RNase III 2 domain. Glu1699, Asp1804, and Glu1807 together coordinate Mg(2+). Residues 1843–1908 (VPRSPVRELL…ARRALRSLKA (66 aa)) enclose the DRBM domain. Ser1862 is modified (phosphoserine).

Belongs to the helicase family. Dicer subfamily. In terms of assembly, component of the RISC loading complex (RLC), or micro-RNA (miRNA) loading complex (miRLC), which is composed of DICER1, AGO2 and TARBP2; DICER1 and TARBP2 are required to process precursor miRNAs (pre-miRNAs) to mature miRNAs and then load them onto AGO2. Note that the trimeric RLC/miRLC is also referred to as RISC. Interacts with DHX9, AGO1, PIWIL1 and PRKRA. Interacts with AGO2, TARBP2, EIF6, MOV10 and RPL7A (60S ribosome subunit); they form a large RNA-induced silencing complex (RISC). Interacts with BCDIN3D. Interacts (via Dicer dsRNA-binding fold domain) with ALOX5 (via PLAT domain); this interaction enhances arachidonate 5-lipoxygenase activity and modifies the miRNA precursor processing activity of DICER1. Mg(2+) serves as cofactor. Requires Mn(2+) as cofactor. Isoform 1 is expressed in a wide variety of tissues. Isoform 2 is specifically expressed in oocytes during their growth (at protein level).

Its subcellular location is the cytoplasm. The catalysed reaction is Endonucleolytic cleavage to 5'-phosphomonoester.. In terms of biological role, double-stranded RNA (dsRNA) endoribonuclease playing a central role in short dsRNA-mediated post-transcriptional gene silencing. Cleaves naturally occurring long dsRNAs and short hairpin pre-microRNAs (miRNA) into fragments of twenty-one to twenty-three nucleotides with 3' overhang of two nucleotides, producing respectively short interfering RNAs (siRNA) and mature microRNAs. SiRNAs and miRNAs serve as guide to direct the RNA-induced silencing complex (RISC) to complementary RNAs to degrade them or prevent their translation. Gene silencing mediated by siRNAs, also called RNA interference, controls the elimination of transcripts from mobile and repetitive DNA elements of the genome but also the degradation of exogenous RNA of viral origin for instance. The miRNA pathway on the other side is a mean to specifically regulate the expression of target genes. Functionally, more active than isoform 1 to process long double-stranded RNA into siRNAs. Responsible for the accumulation of endogenous siRNAs observed in mouse oocytes compared to somatic cells and it regulates meiotic spindle organization in female germline. This Mus musculus (Mouse) protein is Endoribonuclease Dicer (Dicer1).